The chain runs to 212 residues: Imidazole glycerol phosphate synthase subunit HisH (212 aa).

Positions 1–212 (MLAILDYKAG…YEYCKEVSDA (212 aa)) constitute a Glutamine amidotransferase type-1 domain. C79 functions as the Nucleophile in the catalytic mechanism. Catalysis depends on residues H187 and E189.

In terms of assembly, heterodimer of HisH and HisF.

It localises to the cytoplasm. It catalyses the reaction 5-[(5-phospho-1-deoxy-D-ribulos-1-ylimino)methylamino]-1-(5-phospho-beta-D-ribosyl)imidazole-4-carboxamide + L-glutamine = D-erythro-1-(imidazol-4-yl)glycerol 3-phosphate + 5-amino-1-(5-phospho-beta-D-ribosyl)imidazole-4-carboxamide + L-glutamate + H(+). The enzyme catalyses L-glutamine + H2O = L-glutamate + NH4(+). It participates in amino-acid biosynthesis; L-histidine biosynthesis; L-histidine from 5-phospho-alpha-D-ribose 1-diphosphate: step 5/9. Functionally, IGPS catalyzes the conversion of PRFAR and glutamine to IGP, AICAR and glutamate. The HisH subunit catalyzes the hydrolysis of glutamine to glutamate and ammonia as part of the synthesis of IGP and AICAR. The resulting ammonia molecule is channeled to the active site of HisF. This Maridesulfovibrio salexigens (strain ATCC 14822 / DSM 2638 / NCIMB 8403 / VKM B-1763) (Desulfovibrio salexigens) protein is Imidazole glycerol phosphate synthase subunit HisH.